Here is a 329-residue protein sequence, read N- to C-terminus: BTB/POZ domain-containing adapter for CUL3-mediated RhoA degradation protein 1 (329 aa).

The span at 1-15 (MSAEASGPAAAEAPS) shows a compositional bias: low complexity. A disordered region spans residues 1-21 (MSAEASGPAAAEAPSLEVAKP). The 69-residue stretch at 41 to 109 (KYVKLNVGGS…LRDGSVPLPE (69 aa)) folds into the BTB domain. The interval 280–302 (LEATGGAAGGGGASRGEDEDNRE) is disordered.

The protein belongs to the BACURD family. As to quaternary structure, homotetramer; forms a two-fold symmetric tetramer in solution. Interacts with CUL3; interaction is direct and forms a 5:5 heterodecamer. Component of the BCR(KCTD13) E3 ubiquitin ligase complex, at least composed of CUL3, KCTD13/BACURD1 and RBX1. Interacts with RHOA; with a preference for RhoA-GDP. Interacts with POLD2 and PCNA. Interacts with SPRTN.

It localises to the nucleus. Its pathway is protein modification; protein ubiquitination. Substrate-specific adapter of a BCR (BTB-CUL3-RBX1) E3 ubiquitin-protein ligase complex required for synaptic transmission. The BCR(KCTD13) E3 ubiquitin ligase complex mediates the ubiquitination of RHOA, leading to its degradation by the proteasome, thereby regulating the actin cytoskeleton and promoting synaptic transmission. The polypeptide is BTB/POZ domain-containing adapter for CUL3-mediated RhoA degradation protein 1 (KCTD13) (Bos taurus (Bovine)).